Consider the following 459-residue polypeptide: MLKLYNTLTRQKEQFVPIQPGKIGMYVCGVTIYDLCHIGHGRTFVSFDMIVRYLRYSGYEVNFQRNITDVDDKIIKRANENNESCDSLTERLIGEMHRDFDSLNMARPDFEPRATLHMPEIIEMVEKLIAREHAYVAANGDVLFSVSSFPEYGRLSGQNLEQLQAGARVEVEDAKRDPMDFVLWKMSKPGEPTWDSPWGPGRPGWHIECSAMNSKHLGNHFDIHGGGSDLQFPHHENEIAQSCCAHDTKYVNYWMHTGMVMVDKEKMSKSLNNFFTIRDVLNHYDAATVRYFLLSGHYRSQLNYSEENLKQAKSGLERIYTALKDLDLTVDAAPAEAFIAQFKRAMDDDFNTPEAYSVLFEMVREINRLKLTDMQQASALGVALKQLADVLGILGQDVDTFFKGEGSDDEVAEIEALIVERNRARTEKDWPAADVARDGLNALGVILEDGPEGTTWRKK.

A Zn(2+)-binding site is contributed by C28. Residues 30–40 (VTIYDLCHIGH) carry the 'HIGH' region motif. The Zn(2+) site is built by C209, H234, and E238. A 'KMSKS' region motif is present at residues 266 to 270 (KMSKS). K269 contacts ATP.

The protein belongs to the class-I aminoacyl-tRNA synthetase family. As to quaternary structure, monomer. The cofactor is Zn(2+).

Its subcellular location is the cytoplasm. The catalysed reaction is tRNA(Cys) + L-cysteine + ATP = L-cysteinyl-tRNA(Cys) + AMP + diphosphate. The polypeptide is Cysteine--tRNA ligase (Shewanella piezotolerans (strain WP3 / JCM 13877)).